A 185-amino-acid chain; its full sequence is Large ribosomal subunit protein uL22 (185 aa).

The protein belongs to the universal ribosomal protein uL22 family.

In Debaryomyces hansenii (strain ATCC 36239 / CBS 767 / BCRC 21394 / JCM 1990 / NBRC 0083 / IGC 2968) (Yeast), this protein is Large ribosomal subunit protein uL22 (RPL17).